A 395-amino-acid chain; its full sequence is Protein phosphatase methylesterase 1 (395 aa).

Catalysis depends on residues serine 194, aspartate 222, and histidine 348.

The protein belongs to the AB hydrolase superfamily.

It catalyses the reaction [phosphatase 2A protein]-C-terminal L-leucine methyl ester + H2O = [phosphatase 2A protein]-C-terminal L-leucine + methanol + H(+). Demethylates proteins that have been reversibly carboxymethylated. Demethylates the phosphatase PP2A catalytic subunit. In Kluyveromyces lactis (strain ATCC 8585 / CBS 2359 / DSM 70799 / NBRC 1267 / NRRL Y-1140 / WM37) (Yeast), this protein is Protein phosphatase methylesterase 1 (PPE1).